The primary structure comprises 264 residues: Nuclear egress protein 1 (264 aa).

A compositionally biased stretch (basic residues) spans 1–12 (MTVHKNRFRRSR). The interval 1 to 22 (MTVHKNRFRRSRSLSVTHRIQK) is disordered. Residues 83–187 (CLEFSPYANE…HIVFQSRTLH (105 aa)) form a CCCH-type zinc finger.

Belongs to the herpesviridae NEC1 protein family. In terms of assembly, forms a heterohexameric complex with NEC2. Interacts with capsid vertex specific component 2/CVC2; this interaction directs the capsid to the host inner nuclear membrane to initiate budding. In terms of processing, phosphorylated at serine residues in the N-terminus. This phosphorylation regulates the localization within the inner nuclear membrane.

Its subcellular location is the host nucleus inner membrane. In terms of biological role, plays an essential role in virion nuclear egress, the first step of virion release from infected cell. Within the host nucleus, NEC1 interacts with the newly formed capsid through the vertexes and directs it to the inner nuclear membrane by associating with NEC2. Induces the budding of the capsid at the inner nuclear membrane as well as its envelopment into the perinuclear space. There, the NEC1/NEC2 complex promotes the fusion of the enveloped capsid with the outer nuclear membrane and the subsequent release of the viral capsid into the cytoplasm where it will reach the secondary budding sites in the host Golgi or trans-Golgi network. The protein is Nuclear egress protein 1 of Human herpesvirus 6B (HHV-6 variant B).